We begin with the raw amino-acid sequence, 295 residues long: Protoheme IX farnesyltransferase (295 aa).

Helical transmembrane passes span 9 to 29 (ITKPGIIFGNVLSVAGGFFLA), 36 to 56 (FGVFLAAVIGTSLVVASGCVF), 80 to 100 (LVSLKLALLYATLLGIAGVGL), 108 to 128 (LAALFAVIGFVIYVGLYSLYL), 135 to 155 (GTLVGSLSGAMPPVIGYCAVS), 163 to 183 (LTLLVMFSLWQMPHSYAIAIF), 209 to 229 (IMLYILAFLVATLMLTVGGYA), 230 to 250 (GLNYLAVAAGMGMYWLYMAWK), and 265 to 285 (FVFSIFTITALSVMMSVDFQV).

Belongs to the UbiA prenyltransferase family. Protoheme IX farnesyltransferase subfamily.

The protein localises to the cell inner membrane. It catalyses the reaction heme b + (2E,6E)-farnesyl diphosphate + H2O = Fe(II)-heme o + diphosphate. The protein operates within porphyrin-containing compound metabolism; heme O biosynthesis; heme O from protoheme: step 1/1. Its function is as follows. Converts heme B (protoheme IX) to heme O by substitution of the vinyl group on carbon 2 of heme B porphyrin ring with a hydroxyethyl farnesyl side group. The protein is Protoheme IX farnesyltransferase of Pseudomonas syringae pv. syringae (strain B728a).